Consider the following 119-residue polypeptide: Large ribosomal subunit protein bL19 (119 aa).

This sequence belongs to the bacterial ribosomal protein bL19 family.

In terms of biological role, this protein is located at the 30S-50S ribosomal subunit interface and may play a role in the structure and function of the aminoacyl-tRNA binding site. The protein is Large ribosomal subunit protein bL19 of Borreliella afzelii (strain PKo) (Borrelia afzelii).